We begin with the raw amino-acid sequence, 294 residues long: Lipoyl synthase (294 aa).

[4Fe-4S] cluster is bound by residues C35, C40, C46, C61, C65, C68, and S275. In terms of domain architecture, Radical SAM core spans 46 to 264; that stretch reads CWGGGTATVM…RDQGLALGFR (219 aa).

The protein belongs to the radical SAM superfamily. Lipoyl synthase family. [4Fe-4S] cluster is required as a cofactor.

The protein localises to the cytoplasm. The catalysed reaction is [[Fe-S] cluster scaffold protein carrying a second [4Fe-4S](2+) cluster] + N(6)-octanoyl-L-lysyl-[protein] + 2 oxidized [2Fe-2S]-[ferredoxin] + 2 S-adenosyl-L-methionine + 4 H(+) = [[Fe-S] cluster scaffold protein] + N(6)-[(R)-dihydrolipoyl]-L-lysyl-[protein] + 4 Fe(3+) + 2 hydrogen sulfide + 2 5'-deoxyadenosine + 2 L-methionine + 2 reduced [2Fe-2S]-[ferredoxin]. The protein operates within protein modification; protein lipoylation via endogenous pathway; protein N(6)-(lipoyl)lysine from octanoyl-[acyl-carrier-protein]: step 2/2. Catalyzes the radical-mediated insertion of two sulfur atoms into the C-6 and C-8 positions of the octanoyl moiety bound to the lipoyl domains of lipoate-dependent enzymes, thereby converting the octanoylated domains into lipoylated derivatives. This is Lipoyl synthase from Anaeromyxobacter dehalogenans (strain 2CP-C).